The chain runs to 248 residues: Ubiquinone biosynthesis O-methyltransferase (248 aa).

S-adenosyl-L-methionine-binding residues include Arg-41, Gly-72, Asp-93, and Met-136.

It belongs to the methyltransferase superfamily. UbiG/COQ3 family.

It carries out the reaction a 3-demethylubiquinol + S-adenosyl-L-methionine = a ubiquinol + S-adenosyl-L-homocysteine + H(+). It catalyses the reaction a 3-(all-trans-polyprenyl)benzene-1,2-diol + S-adenosyl-L-methionine = a 2-methoxy-6-(all-trans-polyprenyl)phenol + S-adenosyl-L-homocysteine + H(+). Its pathway is cofactor biosynthesis; ubiquinone biosynthesis. Functionally, O-methyltransferase that catalyzes the 2 O-methylation steps in the ubiquinone biosynthetic pathway. This is Ubiquinone biosynthesis O-methyltransferase from Brucella abortus (strain 2308).